Reading from the N-terminus, the 719-residue chain is Glutamate--tRNA ligase, cytoplasmic (719 aa).

Position 93 (Ser93) interacts with ATP. The segment at Ser176–Asp205 is disordered. Over residues Asp195–Val204 the composition is skewed to basic and acidic residues. Arg217–Ala219 contacts L-glutamate. Positions Pro220–His230 match the 'HIGH' region motif. His227 serves as a coordination point for ATP. Residues Tyr393–Cys397 and Arg411 contribute to the L-glutamate site. ATP contacts are provided by residues Glu414 and Leu448–Arg452. Residues Leu448 to Arg452 carry the 'KMSKS' region motif.

Belongs to the class-I aminoacyl-tRNA synthetase family. Glutamate--tRNA ligase type 2 subfamily. In terms of assembly, interacts with GLN2, COL4 and RPP13L4/ZAR1.

The protein localises to the cytoplasm. Its subcellular location is the cytosol. It catalyses the reaction tRNA(Glu) + L-glutamate + ATP = L-glutamyl-tRNA(Glu) + AMP + diphosphate. In terms of biological role, catalyzes the attachment of glutamate to tRNA(Glu) in a two-step reaction: glutamate is first activated by ATP to form Glu-AMP and then transferred to the acceptor end of tRNA(Glu). The protein is Glutamate--tRNA ligase, cytoplasmic of Arabidopsis thaliana (Mouse-ear cress).